A 249-amino-acid chain; its full sequence is tRNA 2'-phosphotransferase 1 (249 aa).

Position 1 is an N-acetylmethionine (methionine 1). 2 disordered regions span residues 1–25 (MNAPGGRRKEGRRTHRPREQDRNVQ) and 220–249 (KPLSLAGDKETETQSGPKLSSRGGRRKIQQ).

This sequence belongs to the KptA/TPT1 family.

It carries out the reaction 2'-phospho-[ligated tRNA] + NAD(+) = mature tRNA + ADP-alpha-D-ribose 1'',2''-cyclic phosphate + nicotinamide. Catalyzes the last step of tRNA splicing, the transfer of the splice junction 2'-phosphate from ligated tRNA to NAD to produce ADP-ribose 1''-2'' cyclic phosphate. This chain is tRNA 2'-phosphotransferase 1 (Trpt1), found in Mus musculus (Mouse).